The following is a 643-amino-acid chain: DNA-directed RNA polymerase subunit beta' (643 aa).

4 residues coordinate Zn(2+): C83, C85, C98, and C101. Residues D480, D482, and D484 each coordinate Mg(2+).

The protein belongs to the RNA polymerase beta' chain family. RpoC1 subfamily. In terms of assembly, in plastids the minimal PEP RNA polymerase catalytic core is composed of four subunits: alpha, beta, beta', and beta''. When a (nuclear-encoded) sigma factor is associated with the core the holoenzyme is formed, which can initiate transcription. Mg(2+) serves as cofactor. It depends on Zn(2+) as a cofactor.

Its subcellular location is the plastid. It is found in the organellar chromatophore. It carries out the reaction RNA(n) + a ribonucleoside 5'-triphosphate = RNA(n+1) + diphosphate. In terms of biological role, DNA-dependent RNA polymerase catalyzes the transcription of DNA into RNA using the four ribonucleoside triphosphates as substrates. This is DNA-directed RNA polymerase subunit beta' from Paulinella chromatophora.